A 554-amino-acid polypeptide reads, in one-letter code: 2-succinyl-5-enolpyruvyl-6-hydroxy-3-cyclohexene-1-carboxylate synthase (554 aa).

This sequence belongs to the TPP enzyme family. MenD subfamily. In terms of assembly, homodimer. Requires Mg(2+) as cofactor. It depends on Mn(2+) as a cofactor. The cofactor is thiamine diphosphate.

It catalyses the reaction isochorismate + 2-oxoglutarate + H(+) = 5-enolpyruvoyl-6-hydroxy-2-succinyl-cyclohex-3-ene-1-carboxylate + CO2. Its pathway is quinol/quinone metabolism; 1,4-dihydroxy-2-naphthoate biosynthesis; 1,4-dihydroxy-2-naphthoate from chorismate: step 2/7. It participates in quinol/quinone metabolism; menaquinone biosynthesis. Catalyzes the thiamine diphosphate-dependent decarboxylation of 2-oxoglutarate and the subsequent addition of the resulting succinic semialdehyde-thiamine pyrophosphate anion to isochorismate to yield 2-succinyl-5-enolpyruvyl-6-hydroxy-3-cyclohexene-1-carboxylate (SEPHCHC). The sequence is that of 2-succinyl-5-enolpyruvyl-6-hydroxy-3-cyclohexene-1-carboxylate synthase from Flavobacterium johnsoniae (strain ATCC 17061 / DSM 2064 / JCM 8514 / BCRC 14874 / CCUG 350202 / NBRC 14942 / NCIMB 11054 / UW101) (Cytophaga johnsonae).